The primary structure comprises 214 residues: Imidazole glycerol phosphate synthase subunit HisH (214 aa).

Positions 2 to 214 (RVALIDYGSG…LIANFLRWAP (213 aa)) constitute a Glutamine amidotransferase type-1 domain. The active-site Nucleophile is Cys-88. Catalysis depends on residues His-194 and Glu-196.

As to quaternary structure, heterodimer of HisH and HisF.

The protein localises to the cytoplasm. The catalysed reaction is 5-[(5-phospho-1-deoxy-D-ribulos-1-ylimino)methylamino]-1-(5-phospho-beta-D-ribosyl)imidazole-4-carboxamide + L-glutamine = D-erythro-1-(imidazol-4-yl)glycerol 3-phosphate + 5-amino-1-(5-phospho-beta-D-ribosyl)imidazole-4-carboxamide + L-glutamate + H(+). The enzyme catalyses L-glutamine + H2O = L-glutamate + NH4(+). The protein operates within amino-acid biosynthesis; L-histidine biosynthesis; L-histidine from 5-phospho-alpha-D-ribose 1-diphosphate: step 5/9. Its function is as follows. IGPS catalyzes the conversion of PRFAR and glutamine to IGP, AICAR and glutamate. The HisH subunit catalyzes the hydrolysis of glutamine to glutamate and ammonia as part of the synthesis of IGP and AICAR. The resulting ammonia molecule is channeled to the active site of HisF. This chain is Imidazole glycerol phosphate synthase subunit HisH, found in Rhodospirillum rubrum (strain ATCC 11170 / ATH 1.1.1 / DSM 467 / LMG 4362 / NCIMB 8255 / S1).